Here is a 92-residue protein sequence, read N- to C-terminus: Small ribosomal subunit protein uS19 (92 aa).

The protein belongs to the universal ribosomal protein uS19 family.

Protein S19 forms a complex with S13 that binds strongly to the 16S ribosomal RNA. This is Small ribosomal subunit protein uS19 from Rhizobium johnstonii (strain DSM 114642 / LMG 32736 / 3841) (Rhizobium leguminosarum bv. viciae).